Here is a 151-residue protein sequence, read N- to C-terminus: UPF0735 ACT domain-containing protein SH1278 (151 aa).

Residues 74–149 (TLILYVNDIV…HVSKVELISM (76 aa)) form the ACT domain.

This sequence belongs to the UPF0735 family.

The chain is UPF0735 ACT domain-containing protein SH1278 from Staphylococcus haemolyticus (strain JCSC1435).